Here is a 479-residue protein sequence, read N- to C-terminus: Sulfate adenylyltransferase subunit 1 (479 aa).

Residues 25-239 (KSLLRFLTCG…EVLETVDIQR (215 aa)) enclose the tr-type G domain. The G1 stretch occupies residues 34 to 41 (GSVDDGKS). 34-41 (GSVDDGKS) is a binding site for GTP. A G2 region spans residues 92 to 96 (GITID). A G3 region spans residues 113-116 (DTPG). GTP-binding positions include 113 to 117 (DTPGH) and 168 to 171 (NKMD). Positions 168–171 (NKMD) are G4. Residues 206-208 (SAL) form a G5 region.

Belongs to the TRAFAC class translation factor GTPase superfamily. Classic translation factor GTPase family. CysN/NodQ subfamily. As to quaternary structure, heterodimer composed of CysD, the smaller subunit, and CysN.

It catalyses the reaction sulfate + ATP + H(+) = adenosine 5'-phosphosulfate + diphosphate. It participates in sulfur metabolism; hydrogen sulfide biosynthesis; sulfite from sulfate: step 1/3. In terms of biological role, with CysD forms the ATP sulfurylase (ATPS) that catalyzes the adenylation of sulfate producing adenosine 5'-phosphosulfate (APS) and diphosphate, the first enzymatic step in sulfur assimilation pathway. APS synthesis involves the formation of a high-energy phosphoric-sulfuric acid anhydride bond driven by GTP hydrolysis by CysN coupled to ATP hydrolysis by CysD. In Salmonella dublin (strain CT_02021853), this protein is Sulfate adenylyltransferase subunit 1.